Here is a 126-residue protein sequence, read N- to C-terminus: Large ribosomal subunit protein bL19 (126 aa).

Belongs to the bacterial ribosomal protein bL19 family.

Its function is as follows. This protein is located at the 30S-50S ribosomal subunit interface and may play a role in the structure and function of the aminoacyl-tRNA binding site. The chain is Large ribosomal subunit protein bL19 from Prochlorococcus marinus (strain MIT 9312).